Reading from the N-terminus, the 449-residue chain is Glucose-6-phosphate isomerase (449 aa).

Glu-291 acts as the Proton donor in catalysis. Catalysis depends on residues His-312 and Lys-426.

This sequence belongs to the GPI family.

The protein resides in the cytoplasm. The catalysed reaction is alpha-D-glucose 6-phosphate = beta-D-fructose 6-phosphate. It participates in carbohydrate biosynthesis; gluconeogenesis. It functions in the pathway carbohydrate degradation; glycolysis; D-glyceraldehyde 3-phosphate and glycerone phosphate from D-glucose: step 2/4. Functionally, catalyzes the reversible isomerization of glucose-6-phosphate to fructose-6-phosphate. The chain is Glucose-6-phosphate isomerase from Streptococcus pyogenes serotype M12 (strain MGAS2096).